The primary structure comprises 181 residues: Adenine phosphoribosyltransferase (181 aa).

This sequence belongs to the purine/pyrimidine phosphoribosyltransferase family. Homodimer.

Its subcellular location is the cytoplasm. It carries out the reaction AMP + diphosphate = 5-phospho-alpha-D-ribose 1-diphosphate + adenine. Its pathway is purine metabolism; AMP biosynthesis via salvage pathway; AMP from adenine: step 1/1. Catalyzes a salvage reaction resulting in the formation of AMP, that is energically less costly than de novo synthesis. This chain is Adenine phosphoribosyltransferase, found in Brucella anthropi (strain ATCC 49188 / DSM 6882 / CCUG 24695 / JCM 21032 / LMG 3331 / NBRC 15819 / NCTC 12168 / Alc 37) (Ochrobactrum anthropi).